A 99-amino-acid polypeptide reads, in one-letter code: UPF0235 protein Avin_03050 (99 aa).

Residues 66–99 form a disordered region; that stretch reads VSLESGESNRQKRVRIRRPRQLPALPGLAPRPDA. Over residues 76–85 the composition is skewed to basic residues; that stretch reads QKRVRIRRPR.

Belongs to the UPF0235 family.

This is UPF0235 protein Avin_03050 from Azotobacter vinelandii (strain DJ / ATCC BAA-1303).